Reading from the N-terminus, the 402-residue chain is NADH-quinone oxidoreductase subunit D (402 aa).

Belongs to the complex I 49 kDa subunit family. NDH-1 is composed of 14 different subunits. Subunits NuoB, C, D, E, F, and G constitute the peripheral sector of the complex.

It is found in the cell inner membrane. The enzyme catalyses a quinone + NADH + 5 H(+)(in) = a quinol + NAD(+) + 4 H(+)(out). Functionally, NDH-1 shuttles electrons from NADH, via FMN and iron-sulfur (Fe-S) centers, to quinones in the respiratory chain. The immediate electron acceptor for the enzyme in this species is believed to be ubiquinone. Couples the redox reaction to proton translocation (for every two electrons transferred, four hydrogen ions are translocated across the cytoplasmic membrane), and thus conserves the redox energy in a proton gradient. This chain is NADH-quinone oxidoreductase subunit D, found in Azorhizobium caulinodans (strain ATCC 43989 / DSM 5975 / JCM 20966 / LMG 6465 / NBRC 14845 / NCIMB 13405 / ORS 571).